The chain runs to 386 residues: F420 non-reducing hydrogenase II small subunit (386 aa).

Positions 1–51 (MVEMSTGMKNLTRTLESMDFLKMDRRTFMKAVSALGATAFLGTYQTEIVNA) form a signal peptide, tat-type signal. 8 residues coordinate [4Fe-4S] cluster: cysteine 67, cysteine 70, cysteine 178, cysteine 227, histidine 273, cysteine 276, cysteine 296, and cysteine 302. [3Fe-4S] cluster-binding residues include cysteine 311, cysteine 330, and cysteine 333.

Belongs to the [NiFe]/[NiFeSe] hydrogenase small subunit family. Composed of a large subunit (VhtA), a small subunit (VhtG) and a cytochrome subunit (VhtC). It depends on [4Fe-4S] cluster as a cofactor. [3Fe-4S] cluster serves as cofactor. Predicted to be exported by the Tat system. The position of the signal peptide cleavage has not been experimentally proven.

It localises to the cell membrane. The catalysed reaction is methanophenazine + H2 = dihydromethanophenazine. Functionally, part of the F420 non-reducing hydrogenase II complex that catalyzes the reduction of methanophenazine to dihydromethanophenazine. The polypeptide is F420 non-reducing hydrogenase II small subunit (Methanosarcina mazei (strain ATCC BAA-159 / DSM 3647 / Goe1 / Go1 / JCM 11833 / OCM 88) (Methanosarcina frisia)).